The chain runs to 253 residues: MSRRKLRAVEYDRDYINFDDDNEIRRLIVTVEEAHLKCRDQNWSAQMLDEQDVAKWTVELEKYFTEFGAPSGCSRAAAIDYVLNAAVQKIYEQKGGDTELCSSRLREQAEKVLEAHRDSQNPLNRLDYSSPNFAENARALCSILGISAHHPDPKVLMKAACLYIAENLGDDVIAEETEEVLKNKKTLNINAFPIGMQAPKNGAVHFSARLLRLICLRQLRVVSRMINETLVEIQNLTMDMSKRADLKQVQYGR.

This is an uncharacterized protein from Caenorhabditis elegans.